A 338-amino-acid polypeptide reads, in one-letter code: Glycerol-3-phosphate dehydrogenase [NAD(P)+] (338 aa).

3 residues coordinate NADPH: tryptophan 11, arginine 30, and lysine 109. Residues lysine 109, glycine 143, and serine 145 each contribute to the sn-glycerol 3-phosphate site. Alanine 147 is an NADPH binding site. Residues lysine 198, aspartate 251, serine 261, arginine 262, and asparagine 263 each coordinate sn-glycerol 3-phosphate. Lysine 198 (proton acceptor) is an active-site residue. Arginine 262 contributes to the NADPH binding site. The NADPH site is built by valine 286 and glutamate 288.

This sequence belongs to the NAD-dependent glycerol-3-phosphate dehydrogenase family.

It is found in the cytoplasm. It carries out the reaction sn-glycerol 3-phosphate + NAD(+) = dihydroxyacetone phosphate + NADH + H(+). It catalyses the reaction sn-glycerol 3-phosphate + NADP(+) = dihydroxyacetone phosphate + NADPH + H(+). Its pathway is membrane lipid metabolism; glycerophospholipid metabolism. Catalyzes the reduction of the glycolytic intermediate dihydroxyacetone phosphate (DHAP) to sn-glycerol 3-phosphate (G3P), the key precursor for phospholipid synthesis. The sequence is that of Glycerol-3-phosphate dehydrogenase [NAD(P)+] from Cupriavidus taiwanensis (strain DSM 17343 / BCRC 17206 / CCUG 44338 / CIP 107171 / LMG 19424 / R1) (Ralstonia taiwanensis (strain LMG 19424)).